The following is a 501-amino-acid chain: MAQVINTNSLSLLTQNNLNKSQSALGTAIERLSSGLRINSAKDDAAGQAIANRFTANIKGLTQASRNANDGISIAHTTEGALNEINNNLQRVRELAVQSANSTNSQSDLDSIQAEITQRLNEIDRVSGQTQFNGVKVLAQDNTLTIQVGANDGETIDIDLKQINSQTLGLDSLNVQKAYDVSATDVISSTYSDGTQALTAPTATDIKAALGNPTVTGDTLTAAVSFKDGKYYATVSGYTDAGDTAKNGKYEVTVDSATGAVSFGATPTKSTVTGDTAVTKVQVNAPVAADAATKKALQDGGVSSADASAATLVKMSYTDKNGKTIEGGYALKAGDKYYAADYDEATGAIKAKTTSYTAADGTTKTAANQLGGVDGKTEVVTIDGKTYNASKAAGHDFKAQPELAEAAAKTTENPLQKIDAALAQVDALRSDLGAVQNRFNSAITNLGNTVNNLSEARSRIEDSDYATEVSNMSRAQILQQAGTSVLAQANQVPQNVLSLLR.

Belongs to the bacterial flagellin family.

It localises to the secreted. It is found in the bacterial flagellum. Functionally, flagellin is the subunit protein which polymerizes to form the filaments of bacterial flagella. The polypeptide is Phase 2 flagellin (fljB) (Salmonella abortus-equi).